Consider the following 351-residue polypeptide: Auxin efflux carrier component 5 (351 aa).

The next 10 membrane-spanning stretches (helical) occupy residues 7-27 (VYKV…GYGS), 39-59 (CDAI…IEFT), 71-91 (FIAA…LWAK), 100-120 (WSIT…GVPL), 132-152 (LVVQ…LFVL), 210-230 (ILGI…PGIL), 234-254 (ILIM…IFMA), 271-291 (MVLK…VLGL), 295-315 (VLRV…FIFA), and 329-349 (VIFG…ALEF).

The protein belongs to the auxin efflux carrier (TC 2.A.69.1) family. Expressed in elongating parts of hypocotyl, cotyledon vasculature and guard cells. Detected in root pericycle and root tip and at later developmental stages in leaves, stems and flowers. Expressed in veins of mature leaves.

Its subcellular location is the endoplasmic reticulum membrane. It is found in the cell membrane. Functionally, auxin transporter regulating intracellular auxin homeostasis and metabolism. Mediates the auxin transport from the cytosol into the lumen of the endoplasmic reticulum. May also act as an auxin efflux carrier when located to the cell membrane. PIN5 and PIN8 may have an antagonistic/compensatory activity. Involved in unfolded protein response (UPR) activation. Involved in the control of vein patterning. Promotes vein formation. PIN5, PIN6, and PIN8 control vein network geometry, but they are expressed in mutually exclusive domains of leaf vascular cells. In Arabidopsis thaliana (Mouse-ear cress), this protein is Auxin efflux carrier component 5.